The following is a 279-amino-acid chain: uncharacterized protein (279 aa).

In terms of domain architecture, HTH lysR-type spans 14-71 (ITPNQIKLLIALHKTKSQNEAAKLLNIKPSSFNIQLKRLENKLGVKLYYSSPNGTVLT). Positions 31 to 50 (QNEAAKLLNIKPSSFNIQLK) form a DNA-binding region, H-T-H motif.

This sequence belongs to the LysR transcriptional regulatory family.

This is an uncharacterized protein from Methanocaldococcus jannaschii (strain ATCC 43067 / DSM 2661 / JAL-1 / JCM 10045 / NBRC 100440) (Methanococcus jannaschii).